The primary structure comprises 220 residues: Thiopurine S-methyltransferase (220 aa).

Residues tryptophan 10, leucine 45, glutamate 66, and arginine 123 each coordinate S-adenosyl-L-methionine.

It belongs to the class I-like SAM-binding methyltransferase superfamily. TPMT family.

It localises to the cytoplasm. It carries out the reaction S-adenosyl-L-methionine + a thiopurine = S-adenosyl-L-homocysteine + a thiopurine S-methylether.. The chain is Thiopurine S-methyltransferase from Nitrosomonas eutropha (strain DSM 101675 / C91 / Nm57).